A 386-amino-acid polypeptide reads, in one-letter code: MNIHEYQAKEILRSYGVSVPNGRVAFTVDEAVEAAKALGTSVCVVKAQIHAGGRGKAGGVKVAKSLEEVRTYASELLGKVLVTHQTGPEGKEVKRLLIEEGCDIQKEYYIGLVVDRATSRVVLMGSEEGGTEIEEVAAKTPEKIFKEYVDPAVGLQAFQARRLAFNINIPKKLVNQAVKFMMGLYQVFVDKDCSIAEINPLVVTGDGKVMALDAKLNFDSNALYRHPDIMEYRDLDEEDPKEVEASKYDLNYIALDGNIGCMVNGAGLAMATMDIIKYYGGEPANFLDVGGGASEEKVTEAFKIILSDPNVKGIFVNIFGGIMKCDVIASGIVAATKQVGLTLPLVVRLEGTNVELGKKILQESGLNITAAESMADGAQKIVELVR.

One can recognise an ATP-grasp domain in the interval 9–244 (KEILRSYGVS…LDEEDPKEVE (236 aa)). ATP is bound by residues lysine 46, 53–55 (GRG), glutamate 99, cysteine 102, and glutamate 107. Mg(2+)-binding residues include asparagine 199 and aspartate 213. Substrate contacts are provided by residues asparagine 264 and 321-323 (GIM).

The protein belongs to the succinate/malate CoA ligase beta subunit family. As to quaternary structure, heterotetramer of two alpha and two beta subunits. Requires Mg(2+) as cofactor.

The catalysed reaction is succinate + ATP + CoA = succinyl-CoA + ADP + phosphate. The enzyme catalyses GTP + succinate + CoA = succinyl-CoA + GDP + phosphate. Its pathway is carbohydrate metabolism; tricarboxylic acid cycle; succinate from succinyl-CoA (ligase route): step 1/1. Succinyl-CoA synthetase functions in the citric acid cycle (TCA), coupling the hydrolysis of succinyl-CoA to the synthesis of either ATP or GTP and thus represents the only step of substrate-level phosphorylation in the TCA. The beta subunit provides nucleotide specificity of the enzyme and binds the substrate succinate, while the binding sites for coenzyme A and phosphate are found in the alpha subunit. The chain is Succinate--CoA ligase [ADP-forming] subunit beta from Geobacillus thermodenitrificans (strain NG80-2).